Reading from the N-terminus, the 445-residue chain is Glutamyl-tRNA(Gln) amidotransferase subunit D (445 aa).

Residues 93–425 (SEIKIISTGG…EKIRSLMISN (333 aa)) form the Asparaginase/glutaminase domain. Residues threonine 103, threonine 179, aspartate 180, and lysine 258 contribute to the active site.

Belongs to the asparaginase 1 family. GatD subfamily. In terms of assembly, heterodimer of GatD and GatE.

It catalyses the reaction L-glutamyl-tRNA(Gln) + L-glutamine + ATP + H2O = L-glutaminyl-tRNA(Gln) + L-glutamate + ADP + phosphate + H(+). Functionally, allows the formation of correctly charged Gln-tRNA(Gln) through the transamidation of misacylated Glu-tRNA(Gln) in organisms which lack glutaminyl-tRNA synthetase. The reaction takes place in the presence of glutamine and ATP through an activated gamma-phospho-Glu-tRNA(Gln). The GatDE system is specific for glutamate and does not act on aspartate. In Saccharolobus islandicus (strain M.16.27) (Sulfolobus islandicus), this protein is Glutamyl-tRNA(Gln) amidotransferase subunit D.